A 232-amino-acid chain; its full sequence is Histone H1-II (232 aa).

Residues 1 to 18 show a composition bias toward low complexity; that stretch reads MSDPAPEVAPAAPVASPA. 2 disordered regions span residues 1-44 and 103-232; these read MSDP…PPVS and GKGA…AKKA. Residues 39 to 114 form the H15 domain; the sequence is THPPVSEMVV…GASGSFKLPA (76 aa). 2 stretches are compositionally biased toward basic residues: residues 149–171 and 179–232; these read SIAK…KSTK and AAKK…AKKA.

The protein belongs to the histone H1/H5 family.

It is found in the nucleus. The protein resides in the chromosome. Histones H1 are necessary for the condensation of nucleosome chains into higher-order structures. The polypeptide is Histone H1-II (Glyptotendipes barbipes (Midge)).